The sequence spans 397 residues: Arginine biosynthesis bifunctional protein ArgJ (397 aa).

Substrate-binding residues include T147, K173, T184, E270, N392, and T397. T184 serves as the catalytic Nucleophile.

It belongs to the ArgJ family. Heterotetramer of two alpha and two beta chains.

The protein localises to the cytoplasm. The catalysed reaction is N(2)-acetyl-L-ornithine + L-glutamate = N-acetyl-L-glutamate + L-ornithine. It carries out the reaction L-glutamate + acetyl-CoA = N-acetyl-L-glutamate + CoA + H(+). Its pathway is amino-acid biosynthesis; L-arginine biosynthesis; L-ornithine and N-acetyl-L-glutamate from L-glutamate and N(2)-acetyl-L-ornithine (cyclic): step 1/1. It functions in the pathway amino-acid biosynthesis; L-arginine biosynthesis; N(2)-acetyl-L-ornithine from L-glutamate: step 1/4. Its function is as follows. Catalyzes two activities which are involved in the cyclic version of arginine biosynthesis: the synthesis of N-acetylglutamate from glutamate and acetyl-CoA as the acetyl donor, and of ornithine by transacetylation between N(2)-acetylornithine and glutamate. In Streptococcus thermophilus (strain ATCC BAA-250 / LMG 18311), this protein is Arginine biosynthesis bifunctional protein ArgJ.